Here is a 482-residue protein sequence, read N- to C-terminus: Putative L-cysteine desulfhydrase 1 (482 aa).

Over residues 1–10 the composition is skewed to acidic residues; it reads MASIPPDDDA. The segment at 1–45 is disordered; the sequence is MASIPPDDDAAAAAAAGAAENGYGNGKGNGNGPAPRPPPAKRPRS. Over residues 11–22 the composition is skewed to low complexity; that stretch reads AAAAAAGAAENG. Lys-276 bears the N6-(pyridoxal phosphate)lysine mark.

This sequence belongs to the class-V pyridoxal-phosphate-dependent aminotransferase family. Pyridoxal 5'-phosphate is required as a cofactor.

It catalyses the reaction L-cysteine + H2O = hydrogen sulfide + pyruvate + NH4(+) + H(+). In terms of biological role, catalyzes the production of hydrogen sulfide (H2S) from cysteine. In Oryza sativa subsp. japonica (Rice), this protein is Putative L-cysteine desulfhydrase 1.